A 119-amino-acid chain; its full sequence is MGIMHTSELLKHIYDINLSYLLLAQRLIVQDKASAMFRLGINEEMATTLAALTLPQMVKLAETNQLVCHFRFDSHQTITQLTQDSRVNDLQQIHTGIMLSTRLLNDVNQPEEALRKKRA.

The protein belongs to the FlhD family. Homodimer; disulfide-linked. Forms a heterohexamer composed of two FlhC and four FlhD subunits. Each FlhC binds a FlhD dimer, forming a heterotrimer, and a hexamer assembles by dimerization of two heterotrimers.

The protein localises to the cytoplasm. In terms of biological role, functions in complex with FlhC as a master transcriptional regulator that regulates transcription of several flagellar and non-flagellar operons by binding to their promoter region. Activates expression of class 2 flagellar genes, including fliA, which is a flagellum-specific sigma factor that turns on the class 3 genes. Also regulates genes whose products function in a variety of physiological pathways. The protein is Flagellar transcriptional regulator FlhD of Shigella boydii serotype 4 (strain Sb227).